The sequence spans 256 residues: Putative adhesin P1-like protein MPN_132 (256 aa).

The span at 56-72 (AVSESQAATSSTTTTAT) shows a compositional bias: low complexity. Disordered regions lie at residues 56-115 (AVSE…PYLH) and 149-235 (FGTD…EVVG). The span at 96–112 (KASTQGSGQTNSQNTSP) shows a compositional bias: polar residues. Low complexity-rich tracts occupy residues 155-179 (TQPQPQPLKTTTPVFGTNSGNLGSV) and 211-222 (STSDGNTSSTNN).

Belongs to the adhesin P1 family.

The sequence is that of Putative adhesin P1-like protein MPN_132 from Mycoplasma pneumoniae (strain ATCC 29342 / M129 / Subtype 1) (Mycoplasmoides pneumoniae).